Here is a 221-residue protein sequence, read N- to C-terminus: Lipoprotein-releasing system ATP-binding protein LolD (221 aa).

The region spanning 6 to 220 (LILKNISKHY…YKLKHRLLNI (215 aa)) is the ABC transporter domain. 42-49 (GSSGSGKS) contacts ATP.

The protein belongs to the ABC transporter superfamily. Lipoprotein translocase (TC 3.A.1.125) family. As to quaternary structure, the complex is composed of two ATP-binding proteins (LolD) and two transmembrane proteins (LolC and LolE).

It is found in the cell inner membrane. Part of the ABC transporter complex LolCDE involved in the translocation of mature outer membrane-directed lipoproteins, from the inner membrane to the periplasmic chaperone, LolA. Responsible for the formation of the LolA-lipoprotein complex in an ATP-dependent manner. This is Lipoprotein-releasing system ATP-binding protein LolD from Rickettsia conorii (strain ATCC VR-613 / Malish 7).